The sequence spans 91 residues: MSRSIKKGPFVDAHLIKKVDAAVAGKDKKPIKTWSRRSTVLPEFIGLTIAVHNGRQHVPIYINENMVGHKLGEFALTRTFKGHAADKKSKR.

It belongs to the universal ribosomal protein uS19 family.

Functionally, protein S19 forms a complex with S13 that binds strongly to the 16S ribosomal RNA. The sequence is that of Small ribosomal subunit protein uS19 from Bordetella pertussis (strain Tohama I / ATCC BAA-589 / NCTC 13251).